Here is a 436-residue protein sequence, read N- to C-terminus: GTPase Der (436 aa).

EngA-type G domains lie at 3 to 168 (PLIA…PESD) and 177 to 352 (IRLA…DNRA). Residues 9 to 16 (GRPNVGKS), 56 to 60 (DTGGY), 120 to 123 (NKVE), 183 to 190 (GRPNVGKS), 230 to 234 (DTAGL), and 295 to 298 (NKWD) each bind GTP. In terms of domain architecture, KH-like spans 353–436 (RKISTSALNR…VTISLRFLQK (84 aa)).

The protein belongs to the TRAFAC class TrmE-Era-EngA-EngB-Septin-like GTPase superfamily. EngA (Der) GTPase family. Associates with the 50S ribosomal subunit.

Functionally, GTPase that plays an essential role in the late steps of ribosome biogenesis. This is GTPase Der from Chlorobium phaeovibrioides (strain DSM 265 / 1930) (Prosthecochloris vibrioformis (strain DSM 265)).